A 249-amino-acid chain; its full sequence is 2,3-bisphosphoglycerate-dependent phosphoglycerate mutase (249 aa).

Substrate contacts are provided by residues 8 to 15, 21 to 22, Arg60, 87 to 90, Lys98, 114 to 115, and 183 to 184; these read RHGESTWN, TG, ERHY, RR, and GN. The active-site Tele-phosphohistidine intermediate is His9. The Proton donor/acceptor role is filled by Glu87.

It belongs to the phosphoglycerate mutase family. BPG-dependent PGAM subfamily. As to quaternary structure, homodimer.

The catalysed reaction is (2R)-2-phosphoglycerate = (2R)-3-phosphoglycerate. The protein operates within carbohydrate degradation; glycolysis; pyruvate from D-glyceraldehyde 3-phosphate: step 3/5. Catalyzes the interconversion of 2-phosphoglycerate and 3-phosphoglycerate. This Aromatoleum aromaticum (strain DSM 19018 / LMG 30748 / EbN1) (Azoarcus sp. (strain EbN1)) protein is 2,3-bisphosphoglycerate-dependent phosphoglycerate mutase.